The sequence spans 500 residues: Pentatricopeptide repeat-containing protein At1g05750, chloroplastic (500 aa).

Residues 1–54 (MGLLPVVGITSPALITHKNHANPKIQRHNQSTSETTVSWTSRINLLTRNGRLAE) constitute a chloroplast transit peptide. PPR repeat units follow at residues 35–69 (TTVS…GVEP), 70–106 (NHIT…GLDR), 108–138 (HVMV…MEDK), 139–173 (NSVT…DLIS), 174–204 (WTAM…GVKP), 205–239 (DYVA…DFKN), 240–270 (NVRV…MEKR), 271–305 (TVVS…GFKP), 306–336 (DAVT…MKCD), and 342–376 (RIEH…PNEV). Residues 377–453 (VIGSLLAACS…QPGFSSIEID (77 aa)) are type E motif. Positions 454-484 (DCMHVFMAGDNAHVETTYIREVLELISSDLR) are type E(+) motif.

This sequence belongs to the PPR family. PCMP-E subfamily.

The protein localises to the plastid. It is found in the chloroplast. The protein is Pentatricopeptide repeat-containing protein At1g05750, chloroplastic (PDE247) of Arabidopsis thaliana (Mouse-ear cress).